The primary structure comprises 76 residues: MKAWVICLMVISIFMMIEPTLAAGGGKFLNPGVLDPCLRPNPPPECQAPGSAGKPRERVNEYKVGCSKLTRCDRVG.

Residues 1–22 (MKAWVICLMVISIFMMIEPTLA) form the signal peptide. 2 cysteine pairs are disulfide-bonded: Cys37–Cys46 and Cys66–Cys72.

Belongs to the plant rapid alkalinization factor (RALF) family.

It is found in the secreted. Its function is as follows. Cell signaling peptide that may regulate plant stress, growth, and development. Mediates a rapid alkalinization of extracellular space by mediating a transient increase in the cytoplasmic Ca(2+) concentration leading to a calcium-dependent signaling events through a cell surface receptor and a concomitant activation of some intracellular mitogen-activated protein kinases. In Arabidopsis thaliana (Mouse-ear cress), this protein is Protein RALF-like 30 (RALFL30).